A 700-amino-acid chain; its full sequence is Elongation factor G (700 aa).

Residues 10-286 form the tr-type G domain; sequence NKVRNIGIMA…AVIDYLPNPL (277 aa). Residues 19 to 26, 83 to 87, and 137 to 140 each bind GTP; these read AHIDAGKT, DTPGH, and NKMD.

The protein belongs to the TRAFAC class translation factor GTPase superfamily. Classic translation factor GTPase family. EF-G/EF-2 subfamily.

It is found in the cytoplasm. Its function is as follows. Catalyzes the GTP-dependent ribosomal translocation step during translation elongation. During this step, the ribosome changes from the pre-translocational (PRE) to the post-translocational (POST) state as the newly formed A-site-bound peptidyl-tRNA and P-site-bound deacylated tRNA move to the P and E sites, respectively. Catalyzes the coordinated movement of the two tRNA molecules, the mRNA and conformational changes in the ribosome. The sequence is that of Elongation factor G from Rhodococcus opacus (strain B4).